The chain runs to 610 residues: GPI transamidase component GPI16 (610 aa).

The first 19 residues, 1–19, serve as a signal peptide directing secretion; that stretch reads MILTLAYFMLGTLLLGVFA. Residues 20 to 551 lie on the Lumenal side of the membrane; that stretch reads EDTVSQIGIN…STPDFSMPYN (532 aa). Asn-184 is a glycosylation site (N-linked (GlcNAc...) asparagine). The helical transmembrane segment at 552–572 threads the bilayer; the sequence is VIILTSTIMGLIFGMLYNLMV. The Cytoplasmic segment spans residues 573–610; that stretch reads KRMVTVEEADKITLQSGLKYKLLKLKEKFLGKKKTKTD.

This sequence belongs to the PIGT family. Forms a complex with CDC91, GPI17, GPI8 and GAA1. Post-translationally, the disulfide bond between GPI8 and GPI16 is important for normal enzyme activity.

The protein resides in the endoplasmic reticulum membrane. It participates in glycolipid biosynthesis; glycosylphosphatidylinositol-anchor biosynthesis. Its function is as follows. Component of the GPI transamidase complex. Involved in transfer of GPI to proteins. In Saccharomyces cerevisiae (strain ATCC 204508 / S288c) (Baker's yeast), this protein is GPI transamidase component GPI16 (GPI16).